The primary structure comprises 346 residues: Dihydroorotase (346 aa).

Zn(2+)-binding residues include His-13 and His-15. Substrate-binding positions include 15–17 (HLR) and Asn-41. Residues Lys-99, His-136, and His-174 each coordinate Zn(2+). Lys-99 bears the N6-carboxylysine mark. A substrate-binding site is contributed by His-136. Leu-219 is a substrate binding site. Position 247 (Asp-247) interacts with Zn(2+). Asp-247 is a catalytic residue. Positions 251 and 263 each coordinate substrate.

It belongs to the metallo-dependent hydrolases superfamily. DHOase family. Class II DHOase subfamily. Homodimer. Zn(2+) is required as a cofactor.

The catalysed reaction is (S)-dihydroorotate + H2O = N-carbamoyl-L-aspartate + H(+). It functions in the pathway pyrimidine metabolism; UMP biosynthesis via de novo pathway; (S)-dihydroorotate from bicarbonate: step 3/3. Catalyzes the reversible cyclization of carbamoyl aspartate to dihydroorotate. The chain is Dihydroorotase from Chelativorans sp. (strain BNC1).